The following is a 519-amino-acid chain: NADH-quinone oxidoreductase subunit N (519 aa).

13 consecutive transmembrane segments (helical) span residues 14–34 (LLPA…EVFL), 44–64 (AVLT…TMFE), 82–102 (FLTF…VSFL), 117–137 (LFAS…TLFV), 167–187 (FILG…LYGA), 209–229 (GLVY…VAAV), 249–269 (LMSV…FFMV), 278–298 (LLGL…LLAI), 307–327 (LAYS…ALFV), 359–379 (ILYY…IVSV), 407–427 (WAFA…TIGF), 431–451 (LLIF…VGVL), and 487–507 (LALV…GPIM).

Belongs to the complex I subunit 2 family. NDH-1 is composed of 14 different subunits. Subunits NuoA, H, J, K, L, M, N constitute the membrane sector of the complex.

It localises to the cell inner membrane. It catalyses the reaction a quinone + NADH + 5 H(+)(in) = a quinol + NAD(+) + 4 H(+)(out). Its function is as follows. NDH-1 shuttles electrons from NADH, via FMN and iron-sulfur (Fe-S) centers, to quinones in the respiratory chain. The immediate electron acceptor for the enzyme in this species is believed to be ubiquinone. Couples the redox reaction to proton translocation (for every two electrons transferred, four hydrogen ions are translocated across the cytoplasmic membrane), and thus conserves the redox energy in a proton gradient. This is NADH-quinone oxidoreductase subunit N from Myxococcus xanthus (strain DK1622).